The primary structure comprises 563 residues: MEFLEYLTPITSHQWGIGSVFLLISIPLIVTRLLTTFWSWRELSAANQKAPGQKRGPTRPTTIPLIGHIVSFLLDGPGFLYNTARYYGRGIPVRVHLATFPSYVISGPELVSAFLKDSTRSLTPMKRSLNYMEHAFGCPHDLVKSFATSDDKDMEQQIHSALQNMLSGPRLGILSERYQQSVKSQVLSVDAGIGDEWVELPDLCTFVETHVFQAATRTIFGPSIVDLNPTLAKDFWNFNKRVKTMFLGIPAWANRTAIRARDDMTEDIKRWQRHAEKNCNIDEIPEDVEWEEYYGSKSTRIRQQLLTKRGITNESARAAENLSMMWATNANSIPAACWFLLQTLHDPLLQARVRKELDAVRIHDTEETNKAAAFKFDITGLTESPLCQSVYAEVLRLGVAAMIVREPTHDNLALGDWKFKKDEFISVPTNNELMDPDFWNSGTPKDPHPLDKFWADRFLVHPDDPQSGPRKDAKKQKAKSDGKPYFSMDGCTWNWIPYGGGAHLCPGRNFAKREIMLTSAIMLTAFDIELLTDTLPKHDKSLFGFGTLPPIGKAPCRIRRRQL.

A helical transmembrane segment spans residues 10 to 30; it reads ITSHQWGIGSVFLLISIPLIV. The disordered stretch occupies residues 462–482; that stretch reads PDDPQSGPRKDAKKQKAKSDG. Residue Cys-505 coordinates heme.

Belongs to the cytochrome P450 family. Heme is required as a cofactor.

It localises to the membrane. The protein operates within secondary metabolite biosynthesis; terpenoid biosynthesis. Cytochrome P450 monooxygenase; part of the gene cluster that mediates the biosynthesis of enfumafungin, a glycosylated fernene-type triterpenoid with potent antifungal activity, mediated by its interaction with beta-1,3-glucan synthase and the fungal cell wall. The pathway begins with the terpene cyclase-glycosyl transferase fusion protein that most likely uses 2,3-oxidosqualene as substrate and catalyzes glycosylation immediately after cyclization. The fernene glycoside then could be processed by the desaturase efuI which catalyzes isomerization of a double bond established by efuA to form the core structure. The latter would then undergo a series of hydroxylations in unknown order at C-2, C-19, C-23 and C-25, which would be catalyzed by two of the three cytochrome P450 monooxygenases efuB, efuG or efuH. The hydroxy-group at C-25 becomes oxidized by the dehydrogenase efuE to enable a spontaneous, non-enzymatic hemiacetal formation with C-23. After hydroxylation at C-2, acetylation by the acetyltransferase efuC takes place. The final steps in enfumafungin biosynthesis require expansion of the 5-membered ring by lactonization via a Baeyer-Villiger reaction mediated by one of the BGC's cytochrome P450 monooxygenases (efuB, efuG or efuH) followed by ring cleavage. This type of reaction would establish a double bond between C-20 and C-21 which could be reduced by the reductase efuL to form the final product. The chain is Cytochrome P450 monooxygenase efuG from Hormonema carpetanum.